A 432-amino-acid polypeptide reads, in one-letter code: Cyclic di-GMP phosphodiesterase CdgJ (432 aa).

In terms of domain architecture, EAL spans 1-232 (MVRCLWAAEC…QRYVSPEHVI (232 aa)). Positions 226–413 (VSPEHVIAMQ…CLELGFDLED (188 aa)) constitute an HDOD domain.

The enzyme catalyses 3',3'-c-di-GMP + H2O = 5'-phosphoguanylyl(3'-&gt;5')guanosine + H(+). Phosphodiesterase (PDE) that catalyzes the hydrolysis of cyclic diguanylate (c-di-GMP). Positively regulates motility and negatively regulates biofilm formation. This is Cyclic di-GMP phosphodiesterase CdgJ from Vibrio cholerae serotype O1 (strain ATCC 39315 / El Tor Inaba N16961).